A 20-amino-acid chain; its full sequence is Antifreeze protein (20 aa).

Post-translationally, N-glycosylated and O-glycosylated.

It localises to the secreted. The protein resides in the extracellular space. Its function is as follows. Antifreeze proteins bind to the surface of ice crystals and inhibit the growth of these crystals, this inhibition causes thermal hysteresis. Causes the shape of ice crystals to change from hexagonal to a bipyramidal shape with rugged facets. Inhibits recrystallization of ice crystals. This chain is Antifreeze protein, found in Antarctomyces psychrotrophicus.